A 274-amino-acid chain; its full sequence is Formamidopyrimidine-DNA glycosylase (274 aa).

Pro-2 serves as the catalytic Schiff-base intermediate with DNA. The active-site Proton donor is Glu-3. Lys-58 functions as the Proton donor; for beta-elimination activity in the catalytic mechanism. Positions 91, 110, and 152 each coordinate DNA. The FPG-type zinc-finger motif lies at 237-271 (KVYGRKNLPCLVCENKIETVVIAGRHSAFCPHCQP). The active-site Proton donor; for delta-elimination activity is Arg-261.

This sequence belongs to the FPG family. In terms of assembly, monomer. Requires Zn(2+) as cofactor.

The catalysed reaction is Hydrolysis of DNA containing ring-opened 7-methylguanine residues, releasing 2,6-diamino-4-hydroxy-5-(N-methyl)formamidopyrimidine.. It catalyses the reaction 2'-deoxyribonucleotide-(2'-deoxyribose 5'-phosphate)-2'-deoxyribonucleotide-DNA = a 3'-end 2'-deoxyribonucleotide-(2,3-dehydro-2,3-deoxyribose 5'-phosphate)-DNA + a 5'-end 5'-phospho-2'-deoxyribonucleoside-DNA + H(+). Involved in base excision repair of DNA damaged by oxidation or by mutagenic agents. Acts as a DNA glycosylase that recognizes and removes damaged bases. Has a preference for oxidized purines, such as 7,8-dihydro-8-oxoguanine (8-oxoG). Has AP (apurinic/apyrimidinic) lyase activity and introduces nicks in the DNA strand. Cleaves the DNA backbone by beta-delta elimination to generate a single-strand break at the site of the removed base with both 3'- and 5'-phosphates. This chain is Formamidopyrimidine-DNA glycosylase, found in Legionella pneumophila (strain Lens).